A 393-amino-acid chain; its full sequence is Matrix metalloproteinase-23 (393 aa).

The Cytoplasmic portion of the chain corresponds to 1-20; sequence MGRGACVPSAASGAGDRARQ. A propeptide spanning residues 1-81 is cleaved from the precursor; it reads MGRGACVPSA…PHPPVPRRRR (81 aa). The chain crosses the membrane as a helical; Signal-anchor for type II membrane protein span at residues 21 to 41; the sequence is LGAVLGALCLFPALVLLAWPG. Residues 42–393 are Lumenal-facing; it reads TPANGAGARV…TYSWRIRVRS (352 aa). Residues 60-79 are disordered; the sequence is TSGVLASGSLGPPHPPVPRR. N-linked (GlcNAc...) asparagine glycans are attached at residues Asn95 and Asn151. Position 214 (His214) interacts with Zn(2+). Residue Glu215 is part of the active site. Residues His218 and His224 each coordinate Zn(2+). N-linked (GlcNAc...) asparagine glycosylation is present at Asn235. The 35-residue stretch at 258 to 292 folds into the ShKT domain; sequence CLDRLFVCASWARRGFCDTRRRLMKRLCPSSCDFC. Cystine bridges form between Cys258/Cys292, Cys265/Cys285, and Cys274/Cys289. One can recognise an Ig-like C2-type domain in the interval 298-383; that stretch reads PTVAATPPPP…VVRRRQRVLS (86 aa). N-linked (GlcNAc...) asparagine glycosylation occurs at Asn319. Residues Cys324 and Cys373 are joined by a disulfide bond.

This sequence belongs to the peptidase M10A family. It depends on Zn(2+) as a cofactor. Post-translationally, N-glycosylated. Proteolytic cleavage might yield an active form.

It is found in the membrane. Its subcellular location is the endoplasmic reticulum membrane. Its function is as follows. Protease. May regulate the surface expression of some potassium channels by retaining them in the endoplasmic reticulum. In Bos taurus (Bovine), this protein is Matrix metalloproteinase-23 (MMP23).